Reading from the N-terminus, the 98-residue chain is uncharacterized protein (98 aa).

This sequence belongs to the HesB/IscA family.

This is an uncharacterized protein from Staphylococcus aureus (strain MRSA252).